Consider the following 166-residue polypeptide: Crossover junction endodeoxyribonuclease RuvC (166 aa).

Active-site residues include Asp-7, Glu-68, and Asp-141. Mg(2+)-binding residues include Asp-7, Glu-68, and Asp-141.

It belongs to the RuvC family. As to quaternary structure, homodimer which binds Holliday junction (HJ) DNA. The HJ becomes 2-fold symmetrical on binding to RuvC with unstacked arms; it has a different conformation from HJ DNA in complex with RuvA. In the full resolvosome a probable DNA-RuvA(4)-RuvB(12)-RuvC(2) complex forms which resolves the HJ. Mg(2+) is required as a cofactor.

The protein localises to the cytoplasm. The catalysed reaction is Endonucleolytic cleavage at a junction such as a reciprocal single-stranded crossover between two homologous DNA duplexes (Holliday junction).. Functionally, the RuvA-RuvB-RuvC complex processes Holliday junction (HJ) DNA during genetic recombination and DNA repair. Endonuclease that resolves HJ intermediates. Cleaves cruciform DNA by making single-stranded nicks across the HJ at symmetrical positions within the homologous arms, yielding a 5'-phosphate and a 3'-hydroxyl group; requires a central core of homology in the junction. The consensus cleavage sequence is 5'-(A/T)TT(C/G)-3'. Cleavage occurs on the 3'-side of the TT dinucleotide at the point of strand exchange. HJ branch migration catalyzed by RuvA-RuvB allows RuvC to scan DNA until it finds its consensus sequence, where it cleaves and resolves the cruciform DNA. The chain is Crossover junction endodeoxyribonuclease RuvC from Koribacter versatilis (strain Ellin345).